We begin with the raw amino-acid sequence, 341 residues long: THO complex subunit 6 homolog (341 aa).

WD repeat units lie at residues 22 to 61, 74 to 112, 124 to 163, 166 to 205, 215 to 254, 256 to 293, and 295 to 339; these read RLHMTIFSQSVSPCGKFLAAGNNYGQIAIFSLSAALSSEA, AHDGPVYSMVSTDRHLLSAGDGEVKGWLWAEILKKGCKE, LEVPEINALLLVPKENSLILAGGDCQLHTMDLETGTFTRA, GHTDYIHCLALRERSPEVLSGGEDGAVRLWDLRIAKEVQT, SRPHNGRWIGCLATDSDWMVCGGGPALTLWHLRSSTPTTV, PIRAPQKHVTFYQDLILSAGQGCCVNHWQLSGELKAQV, and GSSP…AFSL. Serine 180 carries the phosphoserine modification.

It belongs to the WD repeat THOC6 family. In terms of assembly, component of the THO subcomplex, which is composed of THOC1, THOC2, THOC3, THOC5, THOC6 and THOC7. The THO subcomplex interacts with DDX39B to form the THO-DDX39B complex which multimerizes into a 28-subunit tetrameric assembly. Component of the transcription/export (TREX) complex at least composed of ALYREF/THOC4, DDX39B, SARNP/CIP29, CHTOP and the THO subcomplex; in the complex interacts with THOC5; together with THOC5 and THOC7, plays a key structural role in the oligomerization of the THO-DDX39B complex. TREX seems to have a dynamic structure involving ATP-dependent remodeling.

It localises to the nucleus. The protein localises to the nucleus speckle. Functionally, component of the THO subcomplex of the TREX complex which is thought to couple mRNA transcription, processing and nuclear export, and which specifically associates with spliced mRNA and not with unspliced pre-mRNA. Plays a key structural role in the oligomerization of the THO-DDX39B complex. TREX is recruited to spliced mRNAs by a transcription-independent mechanism, binds to mRNA upstream of the exon-junction complex (EJC) and is recruited in a splicing- and cap-dependent manner to a region near the 5' end of the mRNA where it functions in mRNA export to the cytoplasm via the TAP/NXF1 pathway. Plays a role in apoptosis negative control involved in brain development. The sequence is that of THO complex subunit 6 homolog (Thoc6) from Rattus norvegicus (Rat).